A 37-amino-acid polypeptide reads, in one-letter code: Alpha-conotoxin LvIA (37 aa).

The propeptide occupies 1–20; the sequence is FRGRDAAAKASGLVGLTDRR. Disulfide bonds link Cys22-Cys28 and Cys23-Cys36. A ser-Xaa-Pro motif, crucial for potent interaction with nAChR region spans residues 24–26; it reads SHP. Residue Cys36 is modified to Cysteine amide.

It belongs to the conotoxin A superfamily. In terms of tissue distribution, expressed by the venom duct.

The protein localises to the secreted. Functionally, alpha-conotoxins act on postsynaptic membranes, they bind to the nicotinic acetylcholine receptors (nAChR) and thus inhibit them. This toxin blocks alpha-3-beta-2/CHRNA3-CHRNB2 nAChR with high selectivity (IC(50)=8.67 nM (on rat) and 17.5 (on human)). Also has weaker activity on alpha-6/alpha-3-beta-2-beta-3 (CHRNA6/CHRNA3-CHRNB2-CHRNB3) (IC(50)=108 nM (on rat)), alpha-6/alpha-3-beta-4 (CHRNA6/CHRNA3-CHRNB4) (IC(50)=121 nM (on rat)), alpha-3-beta-4 (CHRNA3-CHRNB4) (IC(50)=148 nM (on rat)), and alpha-7/CHRNA7 nAChRs (IC(50)=3000 nM (on rat)). When tested on mouse with hot-plate tests, this toxin significantly increases the base pain threshold and shows analgesic effects. The polypeptide is Alpha-conotoxin LvIA (Conus lividus (Livid cone)).